A 972-amino-acid polypeptide reads, in one-letter code: Coatomer subunit beta (972 aa).

5 HEAT repeats span residues 79–113 (LLYF…DLQH), 133–170 (ELLE…VSEH), 317–354 (GCLE…SRNI), 397–434 (EIAA…LYPQ), and 481–518 (RQSI…QAGP). Residues 494–522 (LKNQRKSQDEDDEATEESATKQAGPVILP) are disordered.

As to quaternary structure, oligomeric complex that consists of at least the alpha, beta, beta', gamma, delta, epsilon and zeta subunits.

The protein localises to the cytoplasm. It is found in the golgi apparatus membrane. Its subcellular location is the cytoplasmic vesicle. The protein resides in the COPI-coated vesicle membrane. Its function is as follows. The coatomer is a cytosolic protein complex that binds to dilysine motifs and reversibly associates with Golgi non-clathrin-coated vesicles, which further mediate biosynthetic protein transport from the ER, via the Golgi up to the trans Golgi network. Coatomer complex is required for budding from Golgi membranes, and is essential for the retrograde Golgi-to-ER transport of dilysine-tagged proteins. The chain is Coatomer subunit beta from Candida glabrata (strain ATCC 2001 / BCRC 20586 / JCM 3761 / NBRC 0622 / NRRL Y-65 / CBS 138) (Yeast).